The following is a 267-amino-acid chain: Dihydropteroate synthase (267 aa).

The 251-residue stretch at 1–251 (MTKTKIMGIL…NVELNAKLAK (251 aa)) folds into the Pterin-binding domain. Asn11 provides a ligand contact to Mg(2+). (7,8-dihydropterin-6-yl)methyl diphosphate-binding positions include Thr51, Asp84, Asn103, Asp167, Lys203, and 239 to 241 (RVH).

The protein belongs to the DHPS family. In terms of assembly, homodimer. Mg(2+) is required as a cofactor.

The catalysed reaction is (7,8-dihydropterin-6-yl)methyl diphosphate + 4-aminobenzoate = 7,8-dihydropteroate + diphosphate. It functions in the pathway cofactor biosynthesis; tetrahydrofolate biosynthesis; 7,8-dihydrofolate from 2-amino-4-hydroxy-6-hydroxymethyl-7,8-dihydropteridine diphosphate and 4-aminobenzoate: step 1/2. In terms of biological role, catalyzes the condensation of para-aminobenzoate (pABA) with 6-hydroxymethyl-7,8-dihydropterin diphosphate (DHPt-PP) to form 7,8-dihydropteroate (H2Pte), the immediate precursor of folate derivatives. This is Dihydropteroate synthase (folP) from Staphylococcus aureus (strain MRSA252).